Reading from the N-terminus, the 283-residue chain is Formamidopyrimidine-DNA glycosylase (283 aa).

The active-site Schiff-base intermediate with DNA is P2. E3 acts as the Proton donor in catalysis. K58 serves as the catalytic Proton donor; for beta-elimination activity. The DNA site is built by H100, R119, and R162. Residues 247 to 283 (RVYGREGLPCVTPGCSGTVGRIVQSGRSSFHCPLCQR) form an FPG-type zinc finger. Catalysis depends on R273, which acts as the Proton donor; for delta-elimination activity.

It belongs to the FPG family. As to quaternary structure, monomer. Requires Zn(2+) as cofactor.

The enzyme catalyses Hydrolysis of DNA containing ring-opened 7-methylguanine residues, releasing 2,6-diamino-4-hydroxy-5-(N-methyl)formamidopyrimidine.. It carries out the reaction 2'-deoxyribonucleotide-(2'-deoxyribose 5'-phosphate)-2'-deoxyribonucleotide-DNA = a 3'-end 2'-deoxyribonucleotide-(2,3-dehydro-2,3-deoxyribose 5'-phosphate)-DNA + a 5'-end 5'-phospho-2'-deoxyribonucleoside-DNA + H(+). In terms of biological role, involved in base excision repair of DNA damaged by oxidation or by mutagenic agents. Acts as a DNA glycosylase that recognizes and removes damaged bases. Has a preference for oxidized purines, such as 7,8-dihydro-8-oxoguanine (8-oxoG). Has AP (apurinic/apyrimidinic) lyase activity and introduces nicks in the DNA strand. Cleaves the DNA backbone by beta-delta elimination to generate a single-strand break at the site of the removed base with both 3'- and 5'-phosphates. The sequence is that of Formamidopyrimidine-DNA glycosylase from Cereibacter sphaeroides (strain ATCC 17029 / ATH 2.4.9) (Rhodobacter sphaeroides).